The chain runs to 430 residues: Glutamate-1-semialdehyde 2,1-aminomutase (430 aa).

Lysine 265 carries the N6-(pyridoxal phosphate)lysine modification.

It belongs to the class-III pyridoxal-phosphate-dependent aminotransferase family. HemL subfamily. In terms of assembly, homodimer. Pyridoxal 5'-phosphate serves as cofactor.

Its subcellular location is the cytoplasm. The catalysed reaction is (S)-4-amino-5-oxopentanoate = 5-aminolevulinate. It functions in the pathway porphyrin-containing compound metabolism; protoporphyrin-IX biosynthesis; 5-aminolevulinate from L-glutamyl-tRNA(Glu): step 2/2. In Shewanella putrefaciens (strain CN-32 / ATCC BAA-453), this protein is Glutamate-1-semialdehyde 2,1-aminomutase.